A 130-amino-acid polypeptide reads, in one-letter code: Methylglyoxal synthase (130 aa).

Positions 1-130 (MSKPRIALIA…DLARNMQDVC (130 aa)) constitute an MGS-like domain. Residues His11, Lys15, 37 to 40 (TGTT), and 57 to 58 (SG) each bind substrate. Asp63 (proton donor/acceptor) is an active-site residue. His90 contributes to the substrate binding site.

Belongs to the methylglyoxal synthase family.

It carries out the reaction dihydroxyacetone phosphate = methylglyoxal + phosphate. Catalyzes the formation of methylglyoxal from dihydroxyacetone phosphate. The sequence is that of Methylglyoxal synthase from Burkholderia orbicola (strain AU 1054).